Reading from the N-terminus, the 299-residue chain is N-acetylmuramic acid 6-phosphate etherase (299 aa).

Residues 54–217 (TIAQYKKGGR…STITMVGVGK (164 aa)) form the SIS domain. The active-site Proton donor is E82. E113 is an active-site residue.

It belongs to the GCKR-like family. MurNAc-6-P etherase subfamily. Homodimer.

The catalysed reaction is N-acetyl-D-muramate 6-phosphate + H2O = N-acetyl-D-glucosamine 6-phosphate + (R)-lactate. It participates in amino-sugar metabolism; N-acetylmuramate degradation. Specifically catalyzes the cleavage of the D-lactyl ether substituent of MurNAc 6-phosphate, producing GlcNAc 6-phosphate and D-lactate. This Staphylococcus aureus (strain bovine RF122 / ET3-1) protein is N-acetylmuramic acid 6-phosphate etherase.